Reading from the N-terminus, the 362-residue chain is Protein-glutamate methylesterase/protein-glutamine glutaminase (362 aa).

The Response regulatory domain maps to 5 to 122 (KVLCVDDSAL…RDGMLDYSEK (118 aa)). Aspartate 56 bears the 4-aspartylphosphate mark. Positions 163–355 (LLSTEKLIIV…RRVMARLSSM (193 aa)) constitute a CheB-type methylesterase domain. Active-site residues include serine 175, histidine 201, and aspartate 297.

The protein belongs to the CheB family. In terms of processing, phosphorylated by CheA. Phosphorylation of the N-terminal regulatory domain activates the methylesterase activity.

Its subcellular location is the cytoplasm. It carries out the reaction [protein]-L-glutamate 5-O-methyl ester + H2O = L-glutamyl-[protein] + methanol + H(+). It catalyses the reaction L-glutaminyl-[protein] + H2O = L-glutamyl-[protein] + NH4(+). Involved in chemotaxis. Part of a chemotaxis signal transduction system that modulates chemotaxis in response to various stimuli. Catalyzes the demethylation of specific methylglutamate residues introduced into the chemoreceptors (methyl-accepting chemotaxis proteins or MCP) by CheR. Also mediates the irreversible deamidation of specific glutamine residues to glutamic acid. The polypeptide is Protein-glutamate methylesterase/protein-glutamine glutaminase (Paraburkholderia xenovorans (strain LB400)).